A 112-amino-acid polypeptide reads, in one-letter code: Putative galactitol utilization operon repressor (112 aa).

The HTH deoR-type domain maps to 5–60; the sequence is SFERRNKIIQLVNEQGTVLVQDLAGVFAASEATIRADLRFLEQKGVVTRFHGGAAK. The H-T-H motif DNA-binding region spans 22–41; sequence VLVQDLAGVFAASEATIRAD.

Functionally, repressor of the gat operon for galacticol transport and metabolism. In K12 strains the operon is constitutively expressed because this gene is inactive. This Escherichia coli (strain K12) protein is Putative galactitol utilization operon repressor (gatR).